Consider the following 235-residue polypeptide: Pyridoxine 5'-phosphate synthase (235 aa).

Asn-7 serves as a coordination point for 3-amino-2-oxopropyl phosphate. Asp-9 to His-10 provides a ligand contact to 1-deoxy-D-xylulose 5-phosphate. Arg-18 provides a ligand contact to 3-amino-2-oxopropyl phosphate. Residue His-43 is the Proton acceptor of the active site. 2 residues coordinate 1-deoxy-D-xylulose 5-phosphate: Arg-45 and His-50. Glu-70 serves as the catalytic Proton acceptor. Residue Thr-100 participates in 1-deoxy-D-xylulose 5-phosphate binding. The active-site Proton donor is His-187. 3-amino-2-oxopropyl phosphate-binding positions include Gly-188 and Gly-209 to His-210.

The protein belongs to the PNP synthase family. Homooctamer; tetramer of dimers.

The protein localises to the cytoplasm. The enzyme catalyses 3-amino-2-oxopropyl phosphate + 1-deoxy-D-xylulose 5-phosphate = pyridoxine 5'-phosphate + phosphate + 2 H2O + H(+). It participates in cofactor biosynthesis; pyridoxine 5'-phosphate biosynthesis; pyridoxine 5'-phosphate from D-erythrose 4-phosphate: step 5/5. Catalyzes the complicated ring closure reaction between the two acyclic compounds 1-deoxy-D-xylulose-5-phosphate (DXP) and 3-amino-2-oxopropyl phosphate (1-amino-acetone-3-phosphate or AAP) to form pyridoxine 5'-phosphate (PNP) and inorganic phosphate. The chain is Pyridoxine 5'-phosphate synthase from Desulfatibacillum aliphaticivorans.